Consider the following 414-residue polypeptide: Sex comb on midleg-like protein 4 (414 aa).

Ser55 and Ser65 each carry phosphoserine. The span at 257–276 (HRGSLHPSSSLYCKRQNSGD) shows a compositional bias: polar residues. The segment at 257–343 (HRGSLHPSSS…DARRPRSRNP (87 aa)) is disordered. Residues 284-304 (AATAGGPRTSPMSSGGPSAPG) are compositionally biased toward low complexity. Positions 288-354 (GGPRTSPMSS…AWTVEDVVWF (67 aa)) constitute an SAM domain. Over residues 312 to 332 (PKRNTTSLEGNRCASSPSQDA) the composition is skewed to polar residues.

It belongs to the SCM family.

It is found in the nucleus. Functionally, putative Polycomb group (PcG) protein. PcG proteins act by forming multiprotein complexes, which are required to maintain the transcriptionally repressive state of homeotic genes throughout development. This chain is Sex comb on midleg-like protein 4 (SCML4), found in Homo sapiens (Human).